The following is a 270-amino-acid chain: tRNA pseudouridine synthase A (270 aa).

The active-site Nucleophile is the D54. A substrate-binding site is contributed by Y112.

Belongs to the tRNA pseudouridine synthase TruA family. In terms of assembly, homodimer.

It carries out the reaction uridine(38/39/40) in tRNA = pseudouridine(38/39/40) in tRNA. Its function is as follows. Formation of pseudouridine at positions 38, 39 and 40 in the anticodon stem and loop of transfer RNAs. The protein is tRNA pseudouridine synthase A of Bordetella bronchiseptica (strain ATCC BAA-588 / NCTC 13252 / RB50) (Alcaligenes bronchisepticus).